A 264-amino-acid polypeptide reads, in one-letter code: Sororin (264 aa).

The interval M1–P45 is disordered. Residues S20, S32, S34, S78, and S82 each carry the phosphoserine modification. A KEN box motif is present at residues K87–N89. T97 is subject to Phosphothreonine. At S106 the chain carries Phosphoserine. Phosphothreonine occurs at positions 110, 114, and 159. Positions F166 to F168 match the FGF motif motif. S222 is modified (phosphoserine). The C-terminal Sororin domain stretch occupies residues L242–E264.

It belongs to the sororin family. In terms of assembly, interacts with the APC/C complex. Interacts with the chromatin-bound cohesin complex; the interaction is indirect, occurs after DNA replication and requires acetylation of the cohesin component SMC3. Interacts (via the FGF motif) with PDS5A and PDS5B; the interaction is direct and prevents the interaction of PDS5A with WAPL. Phosphorylated. Phosphorylation, as cells enter mitosis, disrupts the interaction with PDS5A and relieves the inhibition of WAPL by CDCA5. In terms of processing, ubiquitinated by the APC/C complex in G1, leading to its degradation.

The protein resides in the nucleus. It localises to the chromosome. The protein localises to the cytoplasm. Functionally, regulator of sister chromatid cohesion in mitosis stabilizing cohesin complex association with chromatin. May antagonize the action of WAPL which stimulates cohesin dissociation from chromatin. Cohesion ensures that chromosome partitioning is accurate in both meiotic and mitotic cells and plays an important role in DNA repair. Required for efficient DNA double-stranded break repair. In Mus musculus (Mouse), this protein is Sororin (Cdca5).